The primary structure comprises 187 residues: Ribosome maturation factor RimM (187 aa).

Over residues M1–D17 the composition is skewed to polar residues. The interval M1–V21 is disordered. The PRC barrel domain occupies E111–L184.

This sequence belongs to the RimM family. In terms of assembly, binds ribosomal protein uS19.

It is found in the cytoplasm. Functionally, an accessory protein needed during the final step in the assembly of 30S ribosomal subunit, possibly for assembly of the head region. Essential for efficient processing of 16S rRNA. May be needed both before and after RbfA during the maturation of 16S rRNA. It has affinity for free ribosomal 30S subunits but not for 70S ribosomes. The polypeptide is Ribosome maturation factor RimM (Synechococcus sp. (strain CC9311)).